A 78-amino-acid chain; its full sequence is Acyl carrier protein (78 aa).

Positions 4 to 78 (AQIKEKVYDI…QQAIDYIVKK (75 aa)) constitute a Carrier domain. The residue at position 39 (Ser-39) is an O-(pantetheine 4'-phosphoryl)serine.

This sequence belongs to the acyl carrier protein (ACP) family. 4'-phosphopantetheine is transferred from CoA to a specific serine of apo-ACP by AcpS. This modification is essential for activity because fatty acids are bound in thioester linkage to the sulfhydryl of the prosthetic group.

It is found in the cytoplasm. It participates in lipid metabolism; fatty acid biosynthesis. Its function is as follows. Carrier of the growing fatty acid chain in fatty acid biosynthesis. In Chlorobium phaeobacteroides (strain DSM 266 / SMG 266 / 2430), this protein is Acyl carrier protein.